The following is a 305-amino-acid chain: Ornithine carbamoyltransferase (305 aa).

Carbamoyl phosphate contacts are provided by residues 54–57 (STRT), glutamine 81, arginine 105, and 132–135 (HPCQ). L-ornithine-binding positions include asparagine 163, aspartate 220, and 224 to 225 (SM). Residues 260-261 (CL) and arginine 288 each bind carbamoyl phosphate.

It belongs to the aspartate/ornithine carbamoyltransferase superfamily. OTCase family.

The protein resides in the cytoplasm. It carries out the reaction carbamoyl phosphate + L-ornithine = L-citrulline + phosphate + H(+). The protein operates within amino-acid biosynthesis; L-arginine biosynthesis; L-arginine from L-ornithine and carbamoyl phosphate: step 1/3. Its function is as follows. Reversibly catalyzes the transfer of the carbamoyl group from carbamoyl phosphate (CP) to the N(epsilon) atom of ornithine (ORN) to produce L-citrulline. This is Ornithine carbamoyltransferase from Chromohalobacter salexigens (strain ATCC BAA-138 / DSM 3043 / CIP 106854 / NCIMB 13768 / 1H11).